Here is a 218-residue protein sequence, read N- to C-terminus: Adenylate kinase (218 aa).

10 to 15 (GAGKGT) contributes to the ATP binding site. The segment at 30-59 (STGDMLRAAINEGTPLGLEAKKVMDAGKLV) is NMP. Residues threonine 31, arginine 36, 57–59 (KLV), 85–88 (GFPR), and glutamine 92 contribute to the AMP site. Positions 122–159 (GRRVHPASGRTYHVLFNPPAKEGVDDITGDPLVQREDD) are LID. ATP-binding positions include arginine 123 and 132–133 (TY). The AMP site is built by arginine 156 and arginine 167. Glycine 203 is an ATP binding site.

This sequence belongs to the adenylate kinase family. As to quaternary structure, monomer.

It is found in the cytoplasm. The enzyme catalyses AMP + ATP = 2 ADP. Its pathway is purine metabolism; AMP biosynthesis via salvage pathway; AMP from ADP: step 1/1. In terms of biological role, catalyzes the reversible transfer of the terminal phosphate group between ATP and AMP. Plays an important role in cellular energy homeostasis and in adenine nucleotide metabolism. The chain is Adenylate kinase from Chlorobium phaeobacteroides (strain BS1).